Here is a 195-residue protein sequence, read N- to C-terminus: Phosphoribosylglycinamide formyltransferase (195 aa).

Residue 12–14 (GSN) participates in N(1)-(5-phospho-beta-D-ribosyl)glycinamide binding. (6R)-10-formyltetrahydrofolate contacts are provided by residues K65, 90–93 (MRLI), and N107. Catalysis depends on H109, which acts as the Proton donor.

Belongs to the GART family.

The catalysed reaction is N(1)-(5-phospho-beta-D-ribosyl)glycinamide + (6R)-10-formyltetrahydrofolate = N(2)-formyl-N(1)-(5-phospho-beta-D-ribosyl)glycinamide + (6S)-5,6,7,8-tetrahydrofolate + H(+). It participates in purine metabolism; IMP biosynthesis via de novo pathway; N(2)-formyl-N(1)-(5-phospho-D-ribosyl)glycinamide from N(1)-(5-phospho-D-ribosyl)glycinamide (10-formyl THF route): step 1/1. In terms of biological role, catalyzes the transfer of a formyl group from 10-formyltetrahydrofolate to 5-phospho-ribosyl-glycinamide (GAR), producing 5-phospho-ribosyl-N-formylglycinamide (FGAR) and tetrahydrofolate. The sequence is that of Phosphoribosylglycinamide formyltransferase from Bacillus subtilis (strain 168).